We begin with the raw amino-acid sequence, 407 residues long: Steroid 3-ketoacyl-CoA thiolase FadA6 (407 aa).

C110 serves as the catalytic Acyl-thioester intermediate. Residues Q178, 237-239, and S262 each bind CoA; that span reads RES. Catalysis depends on proton acceptor residues H363 and C393. G395 is a binding site for substrate.

Belongs to the thiolase-like superfamily. Thiolase family.

The enzyme catalyses an acyl-CoA + acetyl-CoA = a 3-oxoacyl-CoA + CoA. The catalysed reaction is 6-methyl-3,7-dioxodecanedioyl-CoA + CoA = 4-methyl-5-oxo-octanedioyl-CoA + acetyl-CoA. It functions in the pathway steroid metabolism; cholesterol degradation. Its function is as follows. May be involved in the final steps of cholesterol and steroid degradation. Catalyzes the formation of 4-methyl-5-oxo-octanedioyl-CoA (MOODA-CoA) and acetyl-CoA from 6-methyl-3,7-dioxodecanedioyl-CoA (MeDODA-CoA) and coenzyme A. The sequence is that of Steroid 3-ketoacyl-CoA thiolase FadA6 from Mycobacterium tuberculosis (strain ATCC 25618 / H37Rv).